Consider the following 298-residue polypeptide: Lipoyl synthase (298 aa).

[4Fe-4S] cluster-binding residues include cysteine 43, cysteine 48, cysteine 54, cysteine 69, cysteine 73, cysteine 76, and serine 280. The 215-residue stretch at phenylalanine 55 to proline 269 folds into the Radical SAM core domain.

Belongs to the radical SAM superfamily. Lipoyl synthase family. It depends on [4Fe-4S] cluster as a cofactor.

Its subcellular location is the cytoplasm. The enzyme catalyses [[Fe-S] cluster scaffold protein carrying a second [4Fe-4S](2+) cluster] + N(6)-octanoyl-L-lysyl-[protein] + 2 oxidized [2Fe-2S]-[ferredoxin] + 2 S-adenosyl-L-methionine + 4 H(+) = [[Fe-S] cluster scaffold protein] + N(6)-[(R)-dihydrolipoyl]-L-lysyl-[protein] + 4 Fe(3+) + 2 hydrogen sulfide + 2 5'-deoxyadenosine + 2 L-methionine + 2 reduced [2Fe-2S]-[ferredoxin]. Its pathway is protein modification; protein lipoylation via endogenous pathway; protein N(6)-(lipoyl)lysine from octanoyl-[acyl-carrier-protein]: step 2/2. Its function is as follows. Catalyzes the radical-mediated insertion of two sulfur atoms into the C-6 and C-8 positions of the octanoyl moiety bound to the lipoyl domains of lipoate-dependent enzymes, thereby converting the octanoylated domains into lipoylated derivatives. The protein is Lipoyl synthase of Nitratidesulfovibrio vulgaris (strain ATCC 29579 / DSM 644 / CCUG 34227 / NCIMB 8303 / VKM B-1760 / Hildenborough) (Desulfovibrio vulgaris).